The chain runs to 185 residues: dCTP deaminase, dUMP-forming (185 aa).

Residues 99-104, D117, 125-127, Q146, Y159, K166, and Q170 each bind dCTP; these read KSSIAR and TLE. Catalysis depends on E127, which acts as the Proton donor/acceptor.

Belongs to the dCTP deaminase family. As to quaternary structure, homotrimer.

It catalyses the reaction dCTP + 2 H2O = dUMP + NH4(+) + diphosphate. It functions in the pathway pyrimidine metabolism; dUMP biosynthesis; dUMP from dCTP: step 1/1. In terms of biological role, bifunctional enzyme that catalyzes both the deamination of dCTP to dUTP and the hydrolysis of dUTP to dUMP without releasing the toxic dUTP intermediate. This is dCTP deaminase, dUMP-forming from Methanospirillum hungatei JF-1 (strain ATCC 27890 / DSM 864 / NBRC 100397 / JF-1).